Reading from the N-terminus, the 752-residue chain is Glutamate carboxypeptidase 2 (752 aa).

Residues 1 to 22 (MWNALQDRDSAEVLGHRQRWLR) lie on the Cytoplasmic side of the membrane. Ser10 is modified (phosphoserine). Residues 23–44 (VGTLVLALTGTFLIGFLFGWFI) traverse the membrane as a helical; Signal-anchor for type II membrane protein segment. At 45 to 752 (KPSNEATGNV…AAAETLREVA (708 aa)) the chain is on the extracellular side. Asn78, Asn123, and Asn155 each carry an N-linked (GlcNAc...) asparagine glycan. Positions 212 and 259 each coordinate substrate. 2 residues coordinate Ca(2+): Thr271 and Tyr274. An NAALADase region spans residues 276-589 (ANEHAYRHEL…QVRGAMVFEL (314 aa)). N-linked (GlcNAc...) asparagine glycosylation is present at Asn338. Zn(2+) is bound by residues His379 and Asp389. Glu426 contacts substrate. The active-site Nucleophile; for NAALADase activity is Glu426. Glu427 contacts Zn(2+). Residues Glu435 and Glu438 each coordinate Ca(2+). Asp455 lines the Zn(2+) pocket. Asn461 and Asn478 each carry an N-linked (GlcNAc...) asparagine glycan. Substrate contacts are provided by residues 519–520 (SG), Asn521, 536–538 (RAR), Tyr554, and 554–555 (YH). His555 contacts Zn(2+). Asn615 carries an N-linked (GlcNAc...) asparagine glycan. The active-site Charge relay system is Ser630. Asn640 is a glycosylation site (N-linked (GlcNAc...) asparagine). Residues Asp668 and His691 each act as charge relay system in the active site. Substrate is bound at residue 701-702 (KY). Asn722 carries an N-linked (GlcNAc...) asparagine glycan.

This sequence belongs to the peptidase M28 family. M28B subfamily. In terms of assembly, homodimer. Zn(2+) serves as cofactor. As to expression, expressed predominantly in the hippocampal region of the brain and in kidney. Lower levels in the ovary, testis and mandibular gland.

Its subcellular location is the cell membrane. It catalyses the reaction Release of an unsubstituted, C-terminal glutamyl residue, typically from Ac-Asp-Glu or folylpoly-gamma-glutamates.. The NAALADase and folate hydrolase activities are inhibited by quisqualic acid. Functionally, has both folate hydrolase and N-acetylated-alpha-linked-acidic dipeptidase (NAALADase) activity. Has a preference for tri-alpha-glutamate peptides. In the intestine, required for the uptake of folate. In the brain, modulates excitatory neurotransmission through the hydrolysis of the neuropeptide, N-aceylaspartylglutamate (NAAG), thereby releasing glutamate. Also exhibits a dipeptidyl-peptidase IV type activity. In vitro, cleaves Gly-Pro-AMC. The protein is Glutamate carboxypeptidase 2 (Folh1) of Mus musculus (Mouse).